A 301-amino-acid polypeptide reads, in one-letter code: Helicase VP6-A (301 aa).

2 disordered regions span residues 1 to 99 (MIDW…TTGT) and 163 to 208 (RRKE…TSVG). Basic and acidic residues-rich tracts occupy residues 8–30 (ESGK…KDGE), 37–55 (GQKK…DRRV), and 67–81 (GFRE…RGDG). K82 contacts ATP. Basic and acidic residues-rich tracts occupy residues 163–177 (RRKE…VAEK) and 186–202 (VHGD…KTPE).

It belongs to the orbivirus VP6 family. Homohexamer.

The protein resides in the virion. It carries out the reaction ATP + H2O = ADP + phosphate + H(+). Its function is as follows. ATP dependent RNA helicase essential for RNA packaging and viral transcription. Possesses ss- and dsRNA-binding capacity. The chain is Helicase VP6-A (Segment-9) from Bluetongue virus 2 (isolate USA) (BTV 2).